A 421-amino-acid polypeptide reads, in one-letter code: Serine--tRNA ligase (421 aa).

231–233 (TGE) lines the L-serine pocket. 262 to 264 (RRE) contributes to the ATP binding site. Glu-285 provides a ligand contact to L-serine. Residue 349 to 352 (EVSS) coordinates ATP. Ser-384 is a binding site for L-serine.

The protein belongs to the class-II aminoacyl-tRNA synthetase family. Type-1 seryl-tRNA synthetase subfamily. As to quaternary structure, homodimer. The tRNA molecule binds across the dimer.

Its subcellular location is the cytoplasm. The catalysed reaction is tRNA(Ser) + L-serine + ATP = L-seryl-tRNA(Ser) + AMP + diphosphate + H(+). The enzyme catalyses tRNA(Sec) + L-serine + ATP = L-seryl-tRNA(Sec) + AMP + diphosphate + H(+). It participates in aminoacyl-tRNA biosynthesis; selenocysteinyl-tRNA(Sec) biosynthesis; L-seryl-tRNA(Sec) from L-serine and tRNA(Sec): step 1/1. Catalyzes the attachment of serine to tRNA(Ser). Is also able to aminoacylate tRNA(Sec) with serine, to form the misacylated tRNA L-seryl-tRNA(Sec), which will be further converted into selenocysteinyl-tRNA(Sec). The sequence is that of Serine--tRNA ligase from Methylacidiphilum infernorum (isolate V4) (Methylokorus infernorum (strain V4)).